The primary structure comprises 236 residues: Aspartate/glutamate leucyltransferase (236 aa).

Belongs to the R-transferase family. Bpt subfamily.

Its subcellular location is the cytoplasm. It carries out the reaction N-terminal L-glutamyl-[protein] + L-leucyl-tRNA(Leu) = N-terminal L-leucyl-L-glutamyl-[protein] + tRNA(Leu) + H(+). It catalyses the reaction N-terminal L-aspartyl-[protein] + L-leucyl-tRNA(Leu) = N-terminal L-leucyl-L-aspartyl-[protein] + tRNA(Leu) + H(+). Its function is as follows. Functions in the N-end rule pathway of protein degradation where it conjugates Leu from its aminoacyl-tRNA to the N-termini of proteins containing an N-terminal aspartate or glutamate. This is Aspartate/glutamate leucyltransferase from Halorhodospira halophila (strain DSM 244 / SL1) (Ectothiorhodospira halophila (strain DSM 244 / SL1)).